The primary structure comprises 408 residues: UDP-N-acetylglucosamine--N-acetylmuramyl-(pentapeptide) pyrophosphoryl-undecaprenol N-acetylglucosamine transferase (408 aa).

Residues 1–20 (MNDTVKKPTGGRGDDPLPAG) form a disordered region. UDP-N-acetyl-alpha-D-glucosamine-binding positions include 41 to 43 (TAG), Asn-160, Arg-197, Ser-231, and Gln-327.

It belongs to the glycosyltransferase 28 family. MurG subfamily.

It is found in the cell membrane. The enzyme catalyses di-trans,octa-cis-undecaprenyl diphospho-N-acetyl-alpha-D-muramoyl-L-alanyl-D-glutamyl-meso-2,6-diaminopimeloyl-D-alanyl-D-alanine + UDP-N-acetyl-alpha-D-glucosamine = di-trans,octa-cis-undecaprenyl diphospho-[N-acetyl-alpha-D-glucosaminyl-(1-&gt;4)]-N-acetyl-alpha-D-muramoyl-L-alanyl-D-glutamyl-meso-2,6-diaminopimeloyl-D-alanyl-D-alanine + UDP + H(+). Its pathway is cell wall biogenesis; peptidoglycan biosynthesis. Cell wall formation. Catalyzes the transfer of a GlcNAc subunit on undecaprenyl-pyrophosphoryl-MurNAc-pentapeptide (lipid intermediate I) to form undecaprenyl-pyrophosphoryl-MurNAc-(pentapeptide)GlcNAc (lipid intermediate II). In Mycolicibacterium paratuberculosis (strain ATCC BAA-968 / K-10) (Mycobacterium paratuberculosis), this protein is UDP-N-acetylglucosamine--N-acetylmuramyl-(pentapeptide) pyrophosphoryl-undecaprenol N-acetylglucosamine transferase.